Reading from the N-terminus, the 181-residue chain is Oligoribonuclease (181 aa).

An Exonuclease domain is found at leucine 8–leucine 171. Tyrosine 129 is a catalytic residue.

The protein belongs to the oligoribonuclease family.

It localises to the cytoplasm. Functionally, 3'-to-5' exoribonuclease specific for small oligoribonucleotides. The protein is Oligoribonuclease of Photorhabdus laumondii subsp. laumondii (strain DSM 15139 / CIP 105565 / TT01) (Photorhabdus luminescens subsp. laumondii).